We begin with the raw amino-acid sequence, 158 residues long: MKADRNLRLCDVVLDETIGRSTPDVEHERAVAIFDLLEENLFEPVGHPGGPYRLNLSLVDAKLVFRISTDGGTEVATHILSLTPFRRIVKDYFMICESYYQAIRSATPSQIEAIDMGRRGIHNEGSQTLMDRLSGKIRLDFDTARRLFTLVCVLYWRG.

It belongs to the UPF0262 family.

This Rhizobium meliloti (strain 1021) (Ensifer meliloti) protein is UPF0262 protein R00612.